Consider the following 183-residue polypeptide: Protein SHI RELATED SEQUENCE 6 (183 aa).

Residues C41, C44, C52, C57, C61, and C68 each contribute to the Zn(2+) site. The segment at residues 41-68 (CRDCGNRAKKECLFERCRTCCKSRGYNC) is a DNA-binding region (zn(2)-C6 fungal-type; degenerate). Residues 79–88 (SSATRSSSSP) are compositionally biased toward low complexity. A disordered region spans residues 79-121 (SSATRSSSSPSERKKKLKIDKQSSPNVSLLPTTTSRQERGFRE). Residues 100 to 113 (QSSPNVSLLPTTTS) show a composition bias toward polar residues. The short motif at 157–160 (ISGH) is the Required for homo- and heterodimerization element.

The protein belongs to the SHI protein family.

It localises to the nucleus. In terms of biological role, transcription activator that binds DNA on 5'-ACTCTAC-3' and promotes auxin homeostasis-regulating gene expression (e.g. YUC genes), as well as genes affecting stamen development, cell expansion and timing of flowering. Synergistically with other SHI-related proteins, regulates gynoecium, stamen and leaf development in a dose-dependent manner, controlling apical-basal patterning. Promotes style and stigma formation, and influences vascular development during gynoecium development. May also have a role in the formation and/or maintenance of the shoot apical meristem (SAM). The polypeptide is Protein SHI RELATED SEQUENCE 6 (SRS6) (Arabidopsis thaliana (Mouse-ear cress)).